The chain runs to 524 residues: MSRQLNLYPGGERLAFSGCSAIISSRVSSSTASFRASGIKGTATFGSRSLFNCGGGRRPALSSAAGRGGSALGSCAATGGGRRGGFVGTVFGSAGLGPACPSVCPPGGIPQVTVNKSLLSPLNVELDPEIQKVRAQEREQIKALNNKFASFIDKVRFLEQQNQVLGTKWELLQQLDLNNCKNNLEPILEGYTSNLRKQLEMLSGDRVRLDSELRSMRDVVEEYKKRYEVEINRRTAAENEFVMLKKDVDAAYMNKVELQAKVDSLTDEIKFLKCLYEGEIAQLQSHISDTSVILSMDNNRDLDLDSIIAQVRAQYEEIALKSKAEAEALYQTKIQELQATAGQHGDDLKLTKAEISDLNRMIQRIRSEIGNVKKQCSNLEMAIADAEQRGDCALKDARAKLDELDAALLQAKEELARMMREYQELMSTKLALDMEIATYRKLLEGEECRMSGEYPNSVSISVISNTSTGAGGTGFSMGFGALSSYSYKSSAVDVKTKGSCGGSELKDAPAKTSGSSCATKKASR.

The head stretch occupies residues 1–136; sequence MSRQLNLYPG…DPEIQKVRAQ (136 aa). The segment at 137-172 is coil 1A; sequence EREQIKALNNKFASFIDKVRFLEQQNQVLGTKWELL. Positions 137-450 constitute an IF rod domain; it reads EREQIKALNN…KLLEGEECRM (314 aa). Positions 173-191 are linker 1; the sequence is QQLDLNNCKNNLEPILEGY. Residues 192–283 form a coil 1B region; the sequence is TSNLRKQLEM…CLYEGEIAQL (92 aa). Residues 284–307 form a linker 12 region; it reads QSHISDTSVILSMDNNRDLDLDSI. Residues 308-446 are coil 2; that stretch reads IAQVRAQYEE…ATYRKLLEGE (139 aa). The segment at 447-524 is tail; sequence ECRMSGEYPN…SSCATKKASR (78 aa). Residues 495-524 are disordered; that stretch reads KTKGSCGGSELKDAPAKTSGSSCATKKASR.

The protein belongs to the intermediate filament family. In terms of assembly, heterotetramer of two type I and two type II keratins.

Its function is as follows. Has a role in hair formation. Specific component of keratin intermediate filaments in the inner root sheath (IRS) of the hair follicle. This Bos taurus (Bovine) protein is Keratin, type II cytoskeletal 72 (KRT72).